A 234-amino-acid polypeptide reads, in one-letter code: MVSKFDTQHLLNSNTALVAGVDEAGRGPLAGPVVVAAVVFDPSQPHINGLNDSKQLSPACRERLYAHIVERALAYKVVMIDSTQIDTLNIYQATMLGMRLAVEGVAHVAKSARIDGNRLPKNLPCPAEALVGGDARDPTIMAASILAKVTRDRHMVELHLQYPHYGFDKHKGYGTPAHLAALAEHGPCLEHRQSFAPVRRMLTPKAIHARQSAHQHNENSPTKAAFNMLIERDD.

One can recognise an RNase H type-2 domain in the interval 16–207; sequence ALVAGVDEAG…VRRMLTPKAI (192 aa). Aspartate 22, glutamate 23, and aspartate 115 together coordinate a divalent metal cation.

It belongs to the RNase HII family. Mn(2+) is required as a cofactor. Mg(2+) serves as cofactor.

It localises to the cytoplasm. It carries out the reaction Endonucleolytic cleavage to 5'-phosphomonoester.. Endonuclease that specifically degrades the RNA of RNA-DNA hybrids. This chain is Ribonuclease HII, found in Xylella fastidiosa (strain M23).